The chain runs to 343 residues: Thromboxane A2 receptor (343 aa).

At 1-29 (MWPNASSLGPCFRPMNITLEERRLIASPW) the chain is on the extracellular side. Asparagine 4 and asparagine 16 each carry an N-linked (GlcNAc...) asparagine glycan. Residues 30 to 52 (FAASFCLVGLASNLLALSVLMGA) traverse the membrane as a helical segment. The Cytoplasmic portion of the chain corresponds to 53-66 (RQGSSQSRSSFLTF). A helical membrane pass occupies residues 67 to 87 (LCGLVLTDFMGLLVTGAIVVT). Topologically, residues 88 to 106 (QHFVLFEWQAVDPGCSLCH) are extracellular. A disulfide bridge connects residues cysteine 105 and cysteine 183. The chain crosses the membrane as a helical span at residues 107 to 128 (FMGVIMVFFGLCPLLLGAAMAS). At 129–149 (ERFLGITRPFSRPATASQRRA) the chain is on the cytoplasmic side. Residues 150–172 (WTTVGLVWASALALGLLPLLGVG) traverse the membrane as a helical segment. Residues 173–193 (HYTVQYPGSWCFLTLGTDPGD) lie on the Extracellular side of the membrane. The chain crosses the membrane as a helical span at residues 194-219 (VAFGLLFALLGSISVGMSFLLNTISV). Residues 220–246 (ATLCHVYHGQATAQQRPRDCEVEMMVQ) are Cytoplasmic-facing. Residues 247 to 270 (LMGIMVVASICWMPLLVFIAQTVL) traverse the membrane as a helical segment. At 271 to 289 (QSPPAMSPTGQLSRLTERQ) the chain is on the extracellular side. Residues 290 to 311 (LLIYLRVATWNQILDPWVYILF) form a helical membrane-spanning segment. The Cytoplasmic portion of the chain corresponds to 312-343 (RRAVIQRFYPRLSTRSRSLSLQPQLTRRSTIH). 2 positions are modified to phosphoserine: serine 329 and serine 331.

It belongs to the G-protein coupled receptor 1 family. In terms of assembly, interacts with RPGRIP1L. Interacts with RACK1; the interaction regulates TBXA2R cell surface expression.

The protein localises to the cell membrane. In terms of biological role, receptor for thromboxane A2 (TXA2), a potent stimulator of platelet aggregation. The activity of this receptor is mediated by a G-protein that activates a phosphatidylinositol-calcium second messenger system. In the kidney, the binding of TXA2 to glomerular TP receptors causes intense vasoconstriction. Activates phospholipase C and adenylyl cyclase. This is Thromboxane A2 receptor (TBXA2R) from Bos taurus (Bovine).